The primary structure comprises 2248 residues: Zinc finger protein lin-13 (2248 aa).

Residues 1-189 (MDEFELFQQL…TYASQYSRPP (189 aa)) are disordered. Over residues 29–38 (QQANNNQSAP) the composition is skewed to polar residues. Residues 54–92 (KQREEEEAQRLADFMQKDMKEPAVKRKRGSEEYKKDPLE) are compositionally biased toward basic and acidic residues. Residues 145 to 155 (ELDENYMEENE) show a composition bias toward acidic residues. Residues 440 to 444 (PLVPV) carry the Required for interaction with hpl-2 isoform a motif. The C2H2-type 1 zinc-finger motif lies at 503–525 (HTCIKCGKTFGTEFMLKHHAQSH). Residues 603-665 (KTKKENRNIT…FTSSKQKKKR (63 aa)) form a disordered region. A compositionally biased stretch (basic and acidic residues) spans 605 to 620 (KKENRNITDSNEKEFS). C2H2-type zinc fingers lie at residues 812 to 837 (VRCI…SDVH), 959 to 982 (YSCS…TRFH), 1140 to 1162 (LMCY…MDDH), 1556 to 1578 (FKCQ…MRDH), 1601 to 1623 (WLCR…MAIH), and 1657 to 1680 (YSCG…SVAH). Over residues 1859–1877 (PRSSLQTNGSSMGSVTTNG) the composition is skewed to polar residues. Residues 1859-1900 (PRSSLQTNGSSMGSVTTNGGRVVRPSPPNSMNVTLRRAPPQQ) are disordered.

As to quaternary structure, interacts (via PLVPV motif) with chromobox protein homolog hpl-2 (via chromo (shadow subtype) domain); the interaction is direct and influences localization of hpl-2 to nuclear foci. As to expression, in the L3 stage, expressed in syncytial hypodermal cell 7, body wall muscles, intestinal cells, distal tip cells and many neurons.

The protein localises to the nucleus. Functionally, involved in repression of vulval fate, possibly by a tumor suppressor protein Rb-mediated mechanism. May act in a common pathway with retinoblastoma-like protein homolog lin-35 and hpl-2 to influence the ER stress response in the intestine. Plays a role in recruiting chromobox protein homolog hpl-2 to specific chromatin sites. The chain is Zinc finger protein lin-13 (lin-13) from Caenorhabditis elegans.